Reading from the N-terminus, the 229-residue chain is MERVRQMFSCVSGMIYRPTDSIAEEYHKWYYGNFVWNTTTWMGIKCLKSVSDMWNYQEILIELEPSLVIEFGSRFGGSALFFANVMMHIGQPFKVLSVDISHKDLDPAARQPDILFIESPSTAPAIAEQIRRLKNEYPGKIFAILDSDHSMKQVLAEMKLLQPLLTAGDYLVVEDSNLNGHPVLPRFGAGPYEAIEAYEREFPGDYEHDVAREKKFGFTFATNGFLIRK.

Positions 1–23 are cleaved as a signal peptide; that stretch reads MERVRQMFSCVSGMIYRPTDSIA.

The protein belongs to the rhamnosyl O-methyltransferase family.

Catalyzes the O-methylation of the hydroxyl group located on C-2 of the first rhamnosyl residue linked to the phenolic group of glycosylated phenolphthiocerol dimycocerosates (PGL) and p-hydroxybenzoic acid derivatives (p-HBAD). The sequence is that of Rhamnosyl O-methyltransferase from Mycobacterium leprae (strain TN).